A 282-amino-acid polypeptide reads, in one-letter code: 4-deoxy-L-threo-5-hexosulose-uronate ketol-isomerase 2 (282 aa).

Zn(2+) is bound by residues histidine 200, histidine 202, glutamate 207, and histidine 249.

Belongs to the KduI family. The cofactor is Zn(2+).

The enzyme catalyses 5-dehydro-4-deoxy-D-glucuronate = 3-deoxy-D-glycero-2,5-hexodiulosonate. It participates in glycan metabolism; pectin degradation; 2-dehydro-3-deoxy-D-gluconate from pectin: step 4/5. Its function is as follows. Catalyzes the isomerization of 5-dehydro-4-deoxy-D-glucuronate to 3-deoxy-D-glycero-2,5-hexodiulosonate. The sequence is that of 4-deoxy-L-threo-5-hexosulose-uronate ketol-isomerase 2 (kduI2) from Rhizobium meliloti (strain 1021) (Ensifer meliloti).